The primary structure comprises 216 residues: Potassium-transporting ATPase KdpC subunit (216 aa).

The chain crosses the membrane as a helical span at residues 12–32 (LLGVSLLVFGLLYQGSLMAIG). A compositionally biased stretch (polar residues) spans 197 to 207 (QNETDQNSDMN). Residues 197 to 216 (QNETDQNSDMNASEIANGDH) are disordered.

Belongs to the KdpC family. As to quaternary structure, the system is composed of three essential subunits: KdpA, KdpB and KdpC. The complex also contains KdpF, a small non-essential subunit.

The protein resides in the cell membrane. In terms of biological role, part of the high-affinity ATP-driven potassium transport (or Kdp) system, which catalyzes the hydrolysis of ATP coupled with the electrogenic transport of potassium into the cytoplasm. This subunit acts as a catalytic chaperone that increases the ATP-binding affinity of the ATP-hydrolyzing subunit KdpB by the formation of a transient KdpB/KdpC/ATP ternary complex. The Kdp system is essential for growth under K(+) limitation, and for survival under desiccation and salt crystal inclusion. This Halobacterium salinarum (strain ATCC 29341 / DSM 671 / R1) protein is Potassium-transporting ATPase KdpC subunit.